Consider the following 322-residue polypeptide: Heterogeneous nuclear ribonucleoprotein D-like (322 aa).

The interval Met-1 to Phe-36 is disordered. Residue Arg-6 is modified to Omega-N-methylarginine. Positions Ser-14–Phe-36 are enriched in low complexity. 2 consecutive RRM domains span residues Asn-51–Glu-133 and Lys-136–Glu-215. At Lys-64 the chain carries N6-methyllysine. Lys-112 participates in a covalent cross-link: Glycyl lysine isopeptide (Lys-Gly) (interchain with G-Cter in SUMO2). Lys-119 carries the N6-acetyllysine modification. A Phosphoserine modification is found at Ser-144. 2 disordered regions span residues Val-216 to Gln-251 and Ser-299 to Tyr-322. The span at Gly-226–Gln-245 shows a compositional bias: gly residues. Residues Gln-245–Tyr-322 form a necessary for interaction with TNPO1 region. Arg-310 is modified (dimethylated arginine; alternate). The residue at position 310 (Arg-310) is an Omega-N-methylarginine; alternate.

In terms of assembly, interacts with TNPO1 and ZNF148. Post-translationally, dimethylation of Arg-310 is probably of the asymmetric type.

The protein localises to the nucleus. It is found in the cytoplasm. Its function is as follows. Acts as a transcriptional regulator. Promotes transcription repression. Promotes transcription activation in differentiated myotubes. Binds to double- and single-stranded DNA sequences. Binds to the transcription suppressor CATR sequence of the COX5B promoter. Binds with high affinity to RNA molecules that contain AU-rich elements (AREs) found within the 3'-UTR of many proto-oncogenes and cytokine mRNAs. Binds both to nuclear and cytoplasmic poly(A) mRNAs. Binds to poly(G) and poly(A), but not to poly(U) or poly(C) RNA homopolymers. Binds to the 5'-ACUAGC-3' RNA consensus sequence. This is Heterogeneous nuclear ribonucleoprotein D-like (Hnrnpdl) from Rattus norvegicus (Rat).